Reading from the N-terminus, the 251-residue chain is RNA polymerase sigma factor SigI (251 aa).

Positions 61-74 match the Polymerase core binding motif; the sequence is DEFSIGLIAFNEAI. The segment at residues 206-225 is a DNA-binding region (H-T-H motif); sequence VKQLEQLVSVSRKTIERNRK.

Belongs to the sigma-70 factor family. SigI subfamily. As to quaternary structure, interacts with RsgI.

It localises to the cytoplasm. Its activity is regulated as follows. Negatively regulated by the anti-sigma-I factor RsgI. Upon exposure to heat, SigI is released from RsgI and activated. Transient heat activation of SigI may depend upon DnaK chaperone. Its function is as follows. Sigma factors are initiation factors that promote the attachment of RNA polymerase to specific initiation sites and are then released. This sigma factor is involved in regulation of cell wall metabolism in response to heat stress. Acts by regulating the expression of genes such as bcrC, mreBH and lytE. Also plays a role in survival at low temperatures. The polypeptide is RNA polymerase sigma factor SigI (Bacillus subtilis (strain 168)).